We begin with the raw amino-acid sequence, 346 residues long: N-acetyl-gamma-glutamyl-phosphate reductase (346 aa).

Cys-151 is an active-site residue.

Belongs to the NAGSA dehydrogenase family. Type 1 subfamily.

It localises to the cytoplasm. It carries out the reaction N-acetyl-L-glutamate 5-semialdehyde + phosphate + NADP(+) = N-acetyl-L-glutamyl 5-phosphate + NADPH + H(+). Its pathway is amino-acid biosynthesis; L-arginine biosynthesis; N(2)-acetyl-L-ornithine from L-glutamate: step 3/4. In terms of biological role, catalyzes the NADPH-dependent reduction of N-acetyl-5-glutamyl phosphate to yield N-acetyl-L-glutamate 5-semialdehyde. The polypeptide is N-acetyl-gamma-glutamyl-phosphate reductase (Ehrlichia chaffeensis (strain ATCC CRL-10679 / Arkansas)).